A 495-amino-acid chain; its full sequence is Cytochrome P450 monooxygenase cnsC (495 aa).

Residue cysteine 434 coordinates heme.

This sequence belongs to the cytochrome P450 family. Heme serves as cofactor.

Its pathway is alkaloid biosynthesis. In terms of biological role, cytochrome P450 monooxygenase; part of the gene cluster that mediates the biosynthesis of communesins, a prominent class of indole alkaloids with great potential as pharmaceuticals. Communesins are biosynthesized by the coupling of tryptamine and aurantioclavine, two building blocks derived from L-tryptophan. The L-tryptophan decarboxylase cnsB converts L-tryptophan to tryptamine, whereas the tryptophan dimethylallyltransferase cnsF converts L-tryptophan to 4-dimethylallyl tryptophan which is further transformed to aurantioclavine by the aurantioclavine synthase cnsA, probably aided by the catalase cnsD. The cytochrome P450 monooxygenase cnsC catalyzes the heterodimeric coupling between the two different indole moieties, tryptamine and aurantioclavine, to construct vicinal quaternary stereocenters and yield the heptacyclic communesin scaffold. The O-methyltransferase cnsE then methylates the communesin scaffold to produce communesin K, the simplest characterized communesin that contains the heptacyclic core. The dioxygenase cnsJ converts communesin K into communesin I. Acylation to introduce the hexadienyl group at position N16 of communesin I by the acyltransferase cnsK leads to the production of communesin B. The hexadienyl group is produced by the highly reducing polyketide synthase cnsI, before being hydrolytically removed from cnsI by the serine hydrolase cnsH, converted into hexadienyl-CoA by the CoA ligase cnsG, and then transferred to communesin I by cnsK. Surprisingly, cnsK may also be a promiscuous acyltransferase that can tolerate a range of acyl groups, including acetyl-, propionyl-, and butyryl-CoA, which lead to communesins A, G and H respectively. The roles of the alpha-ketoglutarate-dependent dioxygenases cnsM and cnsP have still to be determined. The protein is Cytochrome P450 monooxygenase cnsC of Penicillium expansum (Blue mold rot fungus).